The primary structure comprises 289 residues: Ribonuclease Z (289 aa).

Zn(2+)-binding residues include His-63, His-65, Asp-67, His-68, His-143, Asp-197, and His-255. Catalysis depends on Asp-67, which acts as the Proton acceptor.

The protein belongs to the RNase Z family. Homodimer. Requires Zn(2+) as cofactor.

It catalyses the reaction Endonucleolytic cleavage of RNA, removing extra 3' nucleotides from tRNA precursor, generating 3' termini of tRNAs. A 3'-hydroxy group is left at the tRNA terminus and a 5'-phosphoryl group is left at the trailer molecule.. Its function is as follows. Zinc phosphodiesterase, which displays some tRNA 3'-processing endonuclease activity. Probably involved in tRNA maturation, by removing a 3'-trailer from precursor tRNA. The chain is Ribonuclease Z from Azobacteroides pseudotrichonymphae genomovar. CFP2.